Consider the following 284-residue polypeptide: Bifunctional protein FolD (284 aa).

NADP(+) contacts are provided by residues 165-167, S190, and I231; that span reads GRS.

Belongs to the tetrahydrofolate dehydrogenase/cyclohydrolase family. In terms of assembly, homodimer.

The catalysed reaction is (6R)-5,10-methylene-5,6,7,8-tetrahydrofolate + NADP(+) = (6R)-5,10-methenyltetrahydrofolate + NADPH. It carries out the reaction (6R)-5,10-methenyltetrahydrofolate + H2O = (6R)-10-formyltetrahydrofolate + H(+). Its pathway is one-carbon metabolism; tetrahydrofolate interconversion. Functionally, catalyzes the oxidation of 5,10-methylenetetrahydrofolate to 5,10-methenyltetrahydrofolate and then the hydrolysis of 5,10-methenyltetrahydrofolate to 10-formyltetrahydrofolate. This is Bifunctional protein FolD from Clostridium kluyveri (strain ATCC 8527 / DSM 555 / NBRC 12016 / NCIMB 10680 / K1).